An 88-amino-acid polypeptide reads, in one-letter code: Guanine nucleotide-binding protein subunit gamma (88 aa).

A lipid anchor (S-palmitoyl cysteine) is attached at Cys84. At Cys85 the chain carries Cysteine methyl ester. Cys85 carries S-farnesyl cysteine lipidation. Residues 86 to 88 (TIM) constitute a propeptide, removed in mature form.

This sequence belongs to the G protein gamma family. G proteins are composed of 3 units, alpha, beta and gamma.

The protein resides in the membrane. This is Guanine nucleotide-binding protein subunit gamma from Candida glabrata (strain ATCC 2001 / BCRC 20586 / JCM 3761 / NBRC 0622 / NRRL Y-65 / CBS 138) (Yeast).